We begin with the raw amino-acid sequence, 588 residues long: Adenine deaminase (588 aa).

The protein belongs to the metallo-dependent hydrolases superfamily. Adenine deaminase family. Homodimer. The cofactor is Mn(2+).

The enzyme catalyses adenine + H2O + H(+) = hypoxanthine + NH4(+). The chain is Adenine deaminase from Escherichia coli (strain SMS-3-5 / SECEC).